A 323-amino-acid polypeptide reads, in one-letter code: Extracellular endo-alpha-(1-&gt;5)-L-arabinanase 1 (323 aa).

An N-terminal signal peptide occupies residues 1 to 32; it reads MKKKKTWKRFLHFSSAALAAGLIFTSAAPAEA. Asp-44 serves as the catalytic Proton acceptor. Asp-44 serves as a coordination point for substrate. Asp-107 provides a ligand contact to Ca(2+). Substrate is bound by residues Gly-125 and 160–163; that span reads NAID. Glu-165 contacts Ca(2+). Position 180–182 (180–182) interacts with substrate; the sequence is SFW. The active-site Proton donor is Glu-215. A Ca(2+)-binding site is contributed by Asp-287.

It belongs to the glycosyl hydrolase 43 family. The cofactor is Ca(2+).

Its subcellular location is the secreted. The catalysed reaction is Endohydrolysis of (1-&gt;5)-alpha-arabinofuranosidic linkages in (1-&gt;5)-arabinans.. Its pathway is glycan metabolism; L-arabinan degradation. Its function is as follows. Involved in the degradation of arabinan and is a key enzyme in the complete degradation of the plant cell wall. Catalyzes the internal cleavage of alpha-(1-&gt;5)-L-arabinofuranosyl residues of linear 1,5-alpha-L-arabinan and of branched sugar beet arabinan. It displays no activity against heavily substituted arabinans or a range of other polysaccharides (larch wood arabinogalactan, wheat arabinoxylan and p-nitrophenyl-alpha-L-arabinofuranoside). The enzyme activity is progressively reduced as alpha-(1-&gt;5)-chains become shorter or more highly substituted. The chain is Extracellular endo-alpha-(1-&gt;5)-L-arabinanase 1 (abnA) from Bacillus subtilis (strain 168).